Reading from the N-terminus, the 444-residue chain is uncharacterized protein (444 aa).

14 consecutive transmembrane segments (helical) span residues 9–29 (LIVS…MIAV), 42–62 (IASI…TQPI), 82–102 (LFLI…LIVF), 104–126 (ALQA…HVVS), 136–156 (FFGL…SILI), 164–184 (IFWV…TMFP), 193–213 (APLD…IILL), 217–237 (EAPW…PLFF), 263–283 (LSVL…PLFM), 295–315 (GMAL…GAQL), 324–344 (IIFL…LLSS), 347–367 (SVLF…VGLT), 387–407 (GIFS…IGLI), and 411–431 (HTLF…SLGI).

It belongs to the major facilitator superfamily. TCR/Tet family.

The protein resides in the cell membrane. This is an uncharacterized protein from Bacillus subtilis (strain 168).